Reading from the N-terminus, the 90-residue chain is Conotoxin Im6.2 (90 aa).

Positions 1–18 are cleaved as a signal peptide; the sequence is MKLTILLLVAALLVLTQA. A propeptide spanning residues 19–29 is cleaved from the precursor; sequence RTERRRVKSRK. 3 disulfide bridges follow: C61/C75, C68/C79, and C74/C84. The residue at position 89 (E89) is a Glutamic acid 1-amide.

Belongs to the conotoxin O2 superfamily. In terms of tissue distribution, expressed by the venom duct.

Its subcellular location is the secreted. Its function is as follows. Probable neurotoxin. The polypeptide is Conotoxin Im6.2 (Conus imperialis (Imperial cone)).